Consider the following 557-residue polypeptide: Copine-7 (557 aa).

C2 domains follow at residues 1-128 (MSGD…TRPL) and 135-263 (NAGK…AQWD). Ca(2+)-binding residues include D168, D174, D230, D232, and D238. Positions 306 to 505 (HCTVAIDFTA…PALRDIVQFV (200 aa)) constitute a VWFA domain.

Belongs to the copine family. Requires Ca(2+) as cofactor.

The protein resides in the cytoplasm. The protein localises to the nucleus. It is found in the cell membrane. In terms of biological role, calcium-dependent phospholipid-binding protein that may play a role in calcium-mediated intracellular processes. This Mus musculus (Mouse) protein is Copine-7.